A 97-amino-acid polypeptide reads, in one-letter code: Aspartyl/glutamyl-tRNA(Asn/Gln) amidotransferase subunit C (97 aa).

It belongs to the GatC family. In terms of assembly, heterotrimer of A, B and C subunits.

It catalyses the reaction L-glutamyl-tRNA(Gln) + L-glutamine + ATP + H2O = L-glutaminyl-tRNA(Gln) + L-glutamate + ADP + phosphate + H(+). The enzyme catalyses L-aspartyl-tRNA(Asn) + L-glutamine + ATP + H2O = L-asparaginyl-tRNA(Asn) + L-glutamate + ADP + phosphate + 2 H(+). In terms of biological role, allows the formation of correctly charged Asn-tRNA(Asn) or Gln-tRNA(Gln) through the transamidation of misacylated Asp-tRNA(Asn) or Glu-tRNA(Gln) in organisms which lack either or both of asparaginyl-tRNA or glutaminyl-tRNA synthetases. The reaction takes place in the presence of glutamine and ATP through an activated phospho-Asp-tRNA(Asn) or phospho-Glu-tRNA(Gln). This Prochlorococcus marinus (strain AS9601) protein is Aspartyl/glutamyl-tRNA(Asn/Gln) amidotransferase subunit C.